Reading from the N-terminus, the 143-residue chain is Large ribosomal subunit protein uL13 (143 aa).

It belongs to the universal ribosomal protein uL13 family. Part of the 50S ribosomal subunit.

This protein is one of the early assembly proteins of the 50S ribosomal subunit, although it is not seen to bind rRNA by itself. It is important during the early stages of 50S assembly. This chain is Large ribosomal subunit protein uL13, found in Methylacidiphilum infernorum (isolate V4) (Methylokorus infernorum (strain V4)).